We begin with the raw amino-acid sequence, 164 residues long: ATP synthase subunit b (164 aa).

The chain crosses the membrane as a helical span at residues 8–28; sequence FGIIFWQTITLLFVLFILGKF.

The protein belongs to the ATPase B chain family. As to quaternary structure, F-type ATPases have 2 components, F(1) - the catalytic core - and F(0) - the membrane proton channel. F(1) has five subunits: alpha(3), beta(3), gamma(1), delta(1), epsilon(1). F(0) has three main subunits: a(1), b(2) and c(10-14). The alpha and beta chains form an alternating ring which encloses part of the gamma chain. F(1) is attached to F(0) by a central stalk formed by the gamma and epsilon chains, while a peripheral stalk is formed by the delta and b chains.

The protein localises to the cell membrane. F(1)F(0) ATP synthase produces ATP from ADP in the presence of a proton or sodium gradient. F-type ATPases consist of two structural domains, F(1) containing the extramembraneous catalytic core and F(0) containing the membrane proton channel, linked together by a central stalk and a peripheral stalk. During catalysis, ATP synthesis in the catalytic domain of F(1) is coupled via a rotary mechanism of the central stalk subunits to proton translocation. Functionally, component of the F(0) channel, it forms part of the peripheral stalk, linking F(1) to F(0). This is ATP synthase subunit b from Amoebophilus asiaticus (strain 5a2).